The sequence spans 307 residues: Putative F-box/LRR-repeat protein 22 (307 aa).

The segment covering methionine 1–leucine 15 has biased composition (polar residues). Residues methionine 1 to asparagine 26 are disordered. One can recognise an F-box domain in the interval proline 24 to isoleucine 71. LRR repeat units lie at residues tryptophan 108–glycine 133, tyrosine 158–glycine 183, tryptophan 185–leucine 210, serine 212–glutamine 237, and phenylalanine 244–tyrosine 270. The segment covering isoleucine 279 to asparagine 289 has biased composition (acidic residues). The segment at isoleucine 279–phenylalanine 307 is disordered.

The polypeptide is Putative F-box/LRR-repeat protein 22 (FBL22) (Arabidopsis thaliana (Mouse-ear cress)).